A 353-amino-acid chain; its full sequence is Alanine racemase (353 aa).

Lysine 33 acts as the Proton acceptor; specific for D-alanine in catalysis. The residue at position 33 (lysine 33) is an N6-(pyridoxal phosphate)lysine. Arginine 129 contributes to the substrate binding site. Tyrosine 250 functions as the Proton acceptor; specific for L-alanine in the catalytic mechanism. A substrate-binding site is contributed by methionine 298.

Belongs to the alanine racemase family. The cofactor is pyridoxal 5'-phosphate.

It carries out the reaction L-alanine = D-alanine. Its pathway is amino-acid biosynthesis; D-alanine biosynthesis; D-alanine from L-alanine: step 1/1. Functionally, catalyzes the interconversion of L-alanine and D-alanine. May also act on other amino acids. In Azoarcus sp. (strain BH72), this protein is Alanine racemase (alr).